The primary structure comprises 103 residues: Pyrimidine/purine nucleoside phosphorylase (103 aa).

It belongs to the nucleoside phosphorylase PpnP family.

The enzyme catalyses a purine D-ribonucleoside + phosphate = a purine nucleobase + alpha-D-ribose 1-phosphate. The catalysed reaction is adenosine + phosphate = alpha-D-ribose 1-phosphate + adenine. It catalyses the reaction cytidine + phosphate = cytosine + alpha-D-ribose 1-phosphate. It carries out the reaction guanosine + phosphate = alpha-D-ribose 1-phosphate + guanine. The enzyme catalyses inosine + phosphate = alpha-D-ribose 1-phosphate + hypoxanthine. The catalysed reaction is thymidine + phosphate = 2-deoxy-alpha-D-ribose 1-phosphate + thymine. It catalyses the reaction uridine + phosphate = alpha-D-ribose 1-phosphate + uracil. It carries out the reaction xanthosine + phosphate = alpha-D-ribose 1-phosphate + xanthine. Functionally, catalyzes the phosphorolysis of diverse nucleosides, yielding D-ribose 1-phosphate and the respective free bases. Can use uridine, adenosine, guanosine, cytidine, thymidine, inosine and xanthosine as substrates. Also catalyzes the reverse reactions. The sequence is that of Pyrimidine/purine nucleoside phosphorylase from Sulfurovum sp. (strain NBC37-1).